A 384-amino-acid polypeptide reads, in one-letter code: Ribosomal RNA large subunit methyltransferase G (384 aa).

This sequence belongs to the methyltransferase superfamily. RlmG family.

It localises to the cytoplasm. The catalysed reaction is guanosine(1835) in 23S rRNA + S-adenosyl-L-methionine = N(2)-methylguanosine(1835) in 23S rRNA + S-adenosyl-L-homocysteine + H(+). Its function is as follows. Specifically methylates the guanine in position 1835 (m2G1835) of 23S rRNA. The chain is Ribosomal RNA large subunit methyltransferase G from Streptomyces griseus subsp. griseus (strain JCM 4626 / CBS 651.72 / NBRC 13350 / KCC S-0626 / ISP 5235).